An 835-amino-acid chain; its full sequence is Protein translocase subunit SecA (835 aa).

Residues Q85, 103-107 (GEGKT), and D492 each bind ATP. The segment at 788-807 (VQGEAVHPSSDGEEAKKKPV) is disordered. Residues C819, C821, C830, and C831 each contribute to the Zn(2+) site.

Belongs to the SecA family. As to quaternary structure, monomer and homodimer. Part of the essential Sec protein translocation apparatus which comprises SecA, SecYEG and auxiliary proteins SecDF. Other proteins may also be involved. It depends on Zn(2+) as a cofactor.

It localises to the cell membrane. The protein localises to the cytoplasm. The enzyme catalyses ATP + H2O + cellular proteinSide 1 = ADP + phosphate + cellular proteinSide 2.. Its function is as follows. Part of the Sec protein translocase complex. Interacts with the SecYEG preprotein conducting channel. Has a central role in coupling the hydrolysis of ATP to the transfer of proteins into and across the cell membrane, serving as an ATP-driven molecular motor driving the stepwise translocation of polypeptide chains across the membrane. This chain is Protein translocase subunit SecA, found in Bacillus cereus (strain ATCC 10987 / NRS 248).